The primary structure comprises 526 residues: Non-reducing end alpha-L-arabinofuranosidase BoGH43A (526 aa).

The N-terminal stretch at 1 to 20 (MRNALFLIFISLCSVCKSSA) is a signal peptide. D34 serves as the catalytic Proton acceptor. E189 functions as the Proton donor in the catalytic mechanism.

The protein belongs to the glycosyl hydrolase 43 family.

The protein resides in the periplasm. The catalysed reaction is Hydrolysis of terminal non-reducing alpha-L-arabinofuranoside residues in alpha-L-arabinosides.. It participates in glucan metabolism; xyloglucan degradation. In terms of biological role, alpha-L-arabinofuranosidase involved in xyloglucan degradation by mediating the cleavage of terminal non-reducing alpha-L-arabinofuranoside residues in xyloglucan branches, converting the 'S' units to 'X' units. This Bacteroides ovatus (strain ATCC 8483 / DSM 1896 / JCM 5824 / BCRC 10623 / CCUG 4943 / NCTC 11153) protein is Non-reducing end alpha-L-arabinofuranosidase BoGH43A.